Here is a 377-residue protein sequence, read N- to C-terminus: UPF0754 membrane protein lin2327 (377 aa).

2 helical membrane-spanning segments follow: residues 1 to 21 (MSVL…GAMT) and 357 to 377 (YLGG…AMWI).

The protein belongs to the UPF0754 family.

The protein resides in the cell membrane. The protein is UPF0754 membrane protein lin2327 of Listeria innocua serovar 6a (strain ATCC BAA-680 / CLIP 11262).